Reading from the N-terminus, the 1099-residue chain is Adenylate-forming reductase Nps11 (1099 aa).

The adenylation (A) domain stretch occupies residues 29–360 (AEHNSNVPFF…GTECGGLNSM (332 aa)). Residues His244, 347-348 (NV), Thr352, and 432-435 (LVGR) contribute to the AMP site. The 87-residue stretch at 578–664 (WSEESLVVWL…RLSQALARVV (87 aa)) folds into the Carrier domain. Position 613 is an O-(pantetheine 4'-phosphoryl)serine (Ser613). Residues 717–952 (LTGSTGGLGS…VVSWLPPHAV (236 aa)) form a reductase (R) domain region. NADP(+) contacts are provided by residues 721-724 (TGGL), 809-811 (NAW), Tyr883, and Lys887.

It belongs to the adenylate-forming reductase family.

In terms of biological role, adenylate-forming reductase, a natural product biosynthesis enzyme that resembles non-ribosomal peptide synthetases, yet serves to modify one substrate, rather than to condense two or more building blocks. The A-domain preferentially accepts benzoic acid as substrate. The natural product of the enzyme is not yet known. The polypeptide is Adenylate-forming reductase Nps11 (Serpula lacrymans var. lacrymans (strain S7.9) (Dry rot fungus)).